The chain runs to 81 residues: Small ribosomal subunit protein bS16 (81 aa).

Belongs to the bacterial ribosomal protein bS16 family.

This Teredinibacter turnerae (strain ATCC 39867 / T7901) protein is Small ribosomal subunit protein bS16.